Consider the following 129-residue polypeptide: Defensin-like protein 182 (129 aa).

The signal sequence occupies residues 1–26 (METVTSLVFIVNLLIIFTSVVNQARG). Intrachain disulfides connect cysteine 29-cysteine 70, cysteine 36-cysteine 55, cysteine 39-cysteine 64, cysteine 43-cysteine 66, cysteine 83-cysteine 129, cysteine 94-cysteine 114, cysteine 99-cysteine 123, and cysteine 103-cysteine 125.

This sequence belongs to the DEFL family.

It localises to the secreted. Its function is as follows. Confers broad-spectrum resistance to pathogens. This Arabidopsis thaliana (Mouse-ear cress) protein is Defensin-like protein 182 (PDF3.2).